Consider the following 184-residue polypeptide: Large ribosomal subunit protein uL22 (184 aa).

The tract at residues 160-184 is disordered; sequence PEEEVAQKKKISQKKLKKQKLMARE. Positions 167 to 184 are enriched in basic residues; it reads KKKISQKKLKKQKLMARE.

The protein belongs to the universal ribosomal protein uL22 family. In terms of assembly, component of the large ribosomal subunit. In terms of tissue distribution, expressed in pancreas, lung, colon, cystic duct, gall bladder, kidney and liver. Expressed at high levels in the well differentiated pancreatic tumor cell lines HPAF, COLO 357 and Capan-1, the moderately differentiated pancreatic tumor cell lines T3M-4, AsPc-1 and BxPc-3, the poorly differentiated pancreatic tumor cell line MIA PaCa-2, and the pancreatic tumor cell lines of undefined differentiation status such as SW979. Expressed at lower levels in the poorly differentiated pancreatic tumor cell lines HCG-25 and PANC-1.

The protein localises to the cytoplasm. Its function is as follows. Component of the large ribosomal subunit. The ribosome is a large ribonucleoprotein complex responsible for the synthesis of proteins in the cell. This chain is Large ribosomal subunit protein uL22 (RPL17), found in Homo sapiens (Human).